The primary structure comprises 592 residues: Insulin-like growth factor 2 mRNA-binding protein 2 (592 aa).

2 RRM domains span residues 3-76 (NKLY…YSVS) and 82-157 (RRIQ…YIPD). S11 bears the Phosphoserine mark. Residues 157 to 182 (DEEVSSPSPPHRAREQGHGPGSSSQA) are disordered. 2 positions are modified to phosphoserine: S162 and S164. 4 KH domains span residues 186–251 (DFPL…CRMI), 267–334 (EVPL…EIEI), 420–485 (QETV…QGRI), and 502–568 (KLEA…QRKI). The residue at position 543 (T543) is a Phosphothreonine.

Belongs to the RRM IMP/VICKZ family. In terms of assembly, can form homooligomers and heterooligomers with IGF2BP1 and IGF2BP3 in an RNA-dependent manner. Interacts with HNRPD. Interacts with IGF2BP1. Interacts with ELAVL1, DHX9, HNRNPU, MATR3 and PABPC1. Expressed in oocytes, granulosa cells of small and growing follicles and Leydig cells of the testis (at protein level). Expressed in testis and ovary.

The protein localises to the nucleus. Its subcellular location is the cytoplasm. It is found in the P-body. It localises to the stress granule. RNA-binding factor that recruits target transcripts to cytoplasmic protein-RNA complexes (mRNPs). This transcript 'caging' into mRNPs allows mRNA transport and transient storage. It also modulates the rate and location at which target transcripts encounter the translational apparatus and shields them from endonuclease attacks or microRNA-mediated degradation. Preferentially binds to N6-methyladenosine (m6A)-containing mRNAs and increases their stability. Binds to the 5'-UTR of the insulin-like growth factor 2 (IGF2) mRNAs. Binding is isoform-specific. Binds to beta-actin/ACTB and MYC transcripts. Increases MYC mRNA stability by binding to the coding region instability determinant (CRD) and binding is enhanced by m6A-modification of the CRD. In Mus musculus (Mouse), this protein is Insulin-like growth factor 2 mRNA-binding protein 2 (Igf2bp2).